A 113-amino-acid polypeptide reads, in one-letter code: Urotensin-2B (113 aa).

The signal sequence occupies residues 1–27 (MKVFSTSLWCGLLTLLSVMNLFKSVRG). A propeptide spanning residues 28–103 (RPHLSSGHEL…LDNLSSSHTK (76 aa)) is cleaved from the precursor. An intrachain disulfide couples Cys107 to Cys112.

Belongs to the urotensin-2 family.

It localises to the secreted. In terms of biological role, potent vasoconstrictor. This Mus musculus (Mouse) protein is Urotensin-2B (Uts2b).